A 62-amino-acid polypeptide reads, in one-letter code: Photosystem II reaction center protein Z (62 aa).

2 consecutive transmembrane segments (helical) span residues 8 to 28 (AVFA…VVFA) and 41 to 61 (FSGT…NSLI).

This sequence belongs to the PsbZ family. PSII is composed of 1 copy each of membrane proteins PsbA, PsbB, PsbC, PsbD, PsbE, PsbF, PsbH, PsbI, PsbJ, PsbK, PsbL, PsbM, PsbT, PsbY, PsbZ, Psb30/Ycf12, at least 3 peripheral proteins of the oxygen-evolving complex and a large number of cofactors. It forms dimeric complexes.

The protein localises to the plastid. Its subcellular location is the chloroplast thylakoid membrane. In terms of biological role, may control the interaction of photosystem II (PSII) cores with the light-harvesting antenna, regulates electron flow through the 2 photosystem reaction centers. PSII is a light-driven water plastoquinone oxidoreductase, using light energy to abstract electrons from H(2)O, generating a proton gradient subsequently used for ATP formation. This chain is Photosystem II reaction center protein Z, found in Liriodendron tulipifera (Tuliptree).